A 317-amino-acid polypeptide reads, in one-letter code: Acetyl-coenzyme A carboxylase carboxyl transferase subunit alpha (317 aa).

Positions Asn-33–Glu-294 constitute a CoA carboxyltransferase C-terminal domain.

Belongs to the AccA family. Acetyl-CoA carboxylase is a heterohexamer composed of biotin carboxyl carrier protein (AccB), biotin carboxylase (AccC) and two subunits each of ACCase subunit alpha (AccA) and ACCase subunit beta (AccD).

The protein resides in the cytoplasm. It carries out the reaction N(6)-carboxybiotinyl-L-lysyl-[protein] + acetyl-CoA = N(6)-biotinyl-L-lysyl-[protein] + malonyl-CoA. Its pathway is lipid metabolism; malonyl-CoA biosynthesis; malonyl-CoA from acetyl-CoA: step 1/1. Its function is as follows. Component of the acetyl coenzyme A carboxylase (ACC) complex. First, biotin carboxylase catalyzes the carboxylation of biotin on its carrier protein (BCCP) and then the CO(2) group is transferred by the carboxyltransferase to acetyl-CoA to form malonyl-CoA. This chain is Acetyl-coenzyme A carboxylase carboxyl transferase subunit alpha, found in Wigglesworthia glossinidia brevipalpis.